A 213-amino-acid chain; its full sequence is StAR-related lipid transfer protein 5 (213 aa).

Positions 1–213 (MDPALAAQMS…LQKAVKQFHE (213 aa)) constitute an START domain.

Its function is as follows. May be involved in the intracellular transport of sterols or other lipids. May bind cholesterol or other sterols. The sequence is that of StAR-related lipid transfer protein 5 (STARD5) from Homo sapiens (Human).